Here is a 368-residue protein sequence, read N- to C-terminus: tRNA-specific 2-thiouridylase MnmA (368 aa).

ATP-binding positions include 11-18 (GMSGGVDS) and M37. Residues 97–99 (NPD) are interaction with target base in tRNA. C102 acts as the Nucleophile in catalysis. C102 and C199 are oxidised to a cystine. G127 serves as a coordination point for ATP. The interval 149-151 (KDQ) is interaction with tRNA. C199 serves as the catalytic Cysteine persulfide intermediate. Positions 311–312 (RY) are interaction with tRNA.

Belongs to the MnmA/TRMU family. As to quaternary structure, interacts with TusE.

The protein resides in the cytoplasm. The catalysed reaction is S-sulfanyl-L-cysteinyl-[protein] + uridine(34) in tRNA + AH2 + ATP = 2-thiouridine(34) in tRNA + L-cysteinyl-[protein] + A + AMP + diphosphate + H(+). Its function is as follows. Catalyzes the 2-thiolation of uridine at the wobble position (U34) of tRNA(Lys), tRNA(Glu) and tRNA(Gln), leading to the formation of s(2)U34, the first step of tRNA-mnm(5)s(2)U34 synthesis. Sulfur is provided by IscS, via a sulfur-relay system. Binds ATP and its substrate tRNAs. The protein is tRNA-specific 2-thiouridylase MnmA of Shigella boydii serotype 18 (strain CDC 3083-94 / BS512).